The sequence spans 278 residues: Ribosomal RNA small subunit methyltransferase A (278 aa).

The S-adenosyl-L-methionine site is built by Asn-27, Leu-29, Gly-54, Glu-75, Asp-95, and Asn-118.

It belongs to the class I-like SAM-binding methyltransferase superfamily. rRNA adenine N(6)-methyltransferase family. RsmA subfamily.

The protein resides in the cytoplasm. It catalyses the reaction adenosine(1518)/adenosine(1519) in 16S rRNA + 4 S-adenosyl-L-methionine = N(6)-dimethyladenosine(1518)/N(6)-dimethyladenosine(1519) in 16S rRNA + 4 S-adenosyl-L-homocysteine + 4 H(+). Specifically dimethylates two adjacent adenosines (A1518 and A1519) in the loop of a conserved hairpin near the 3'-end of 16S rRNA in the 30S particle. May play a critical role in biogenesis of 30S subunits. The chain is Ribosomal RNA small subunit methyltransferase A from Chlamydia abortus (strain DSM 27085 / S26/3) (Chlamydophila abortus).